We begin with the raw amino-acid sequence, 276 residues long: Protease HtpX homolog (276 aa).

A helical transmembrane segment spans residues 16–36; the sequence is LFIWFGGMIAGQTGMVIAFLV. Histidine 130 contributes to the Zn(2+) binding site. The active site involves glutamate 131. Histidine 134 is a binding site for Zn(2+). 2 consecutive transmembrane segments (helical) span residues 142–162 and 173–193; these read IGTVAATIAGAIAMLANFGMF and IFVMLALMFIMPMAASIIQMT. Glutamate 199 is a binding site for Zn(2+).

Belongs to the peptidase M48B family. Zn(2+) serves as cofactor.

The protein resides in the cell inner membrane. This Sulfurovum sp. (strain NBC37-1) protein is Protease HtpX homolog.